We begin with the raw amino-acid sequence, 549 residues long: Chaperonin GroEL (549 aa).

ATP contacts are provided by residues 29–32 (TAGP), Lys50, 86–90 (DGTTT), Gly418, and Asp499.

This sequence belongs to the chaperonin (HSP60) family. In terms of assembly, forms a cylinder of 14 subunits composed of two heptameric rings stacked back-to-back. Interacts with the co-chaperonin GroES.

It is found in the cytoplasm. The enzyme catalyses ATP + H2O + a folded polypeptide = ADP + phosphate + an unfolded polypeptide.. Functionally, together with its co-chaperonin GroES, plays an essential role in assisting protein folding. The GroEL-GroES system forms a nano-cage that allows encapsulation of the non-native substrate proteins and provides a physical environment optimized to promote and accelerate protein folding. In Wolbachia sp. subsp. Drosophila simulans (strain wRi), this protein is Chaperonin GroEL.